Here is a 438-residue protein sequence, read N- to C-terminus: Adenosylhomocysteinase (438 aa).

3 residues coordinate substrate: Thr-64, Asp-139, and Glu-164. Residue 165–167 participates in NAD(+) binding; that stretch reads TTT. Residues Lys-194 and Asp-198 each coordinate substrate. NAD(+) is bound by residues Asn-199, 228–233, Glu-251, Asn-286, 307–309, and Asn-352; these read GYGDVG and IGH.

It belongs to the adenosylhomocysteinase family. NAD(+) serves as cofactor.

The protein resides in the cytoplasm. It carries out the reaction S-adenosyl-L-homocysteine + H2O = L-homocysteine + adenosine. It functions in the pathway amino-acid biosynthesis; L-homocysteine biosynthesis; L-homocysteine from S-adenosyl-L-homocysteine: step 1/1. In terms of biological role, may play a key role in the regulation of the intracellular concentration of adenosylhomocysteine. The chain is Adenosylhomocysteinase from Coxiella burnetii (strain CbuK_Q154) (Coxiella burnetii (strain Q154)).